The chain runs to 875 residues: Probable dipeptidyl-aminopeptidase B (875 aa).

Positions 1–90 (MSEPKPIQDT…ASSETTPPRK (90 aa)) are disordered. At 1–98 (MSEPKPIQDT…RKGVDRKLKK (98 aa)) the chain is on the cytoplasmic side. Residues 19–28 (SSISSASTTS) show a composition bias toward low complexity. The segment covering 33 to 46 (RLAEESEKNHDASS) has biased composition (basic and acidic residues). A helical; Signal-anchor for type II membrane protein membrane pass occupies residues 99–119 (VLLIVGGFFVAAWIVSLVVFL). Residues 120–875 (TNKSYKHGSQ…VNDAKPKIES (756 aa)) lie on the Vacuolar side of the membrane. N-linked (GlcNAc...) asparagine glycosylation is found at N354 and N567. Residues 689 to 715 (VDFQSSDGGRRTTRSPRRATGRPSATS) are disordered. Residues 699-708 (RTTRSPRRAT) show a composition bias toward basic residues. S726 serves as the catalytic Charge relay system. N-linked (GlcNAc...) asparagine glycosylation occurs at N785. Active-site charge relay system residues include D803 and H836.

Belongs to the peptidase S9B family.

The protein resides in the vacuole membrane. The catalysed reaction is Release of an N-terminal dipeptide, Xaa-Yaa-|-Zaa-, from a polypeptide, preferentially when Yaa is Pro, provided Zaa is neither Pro nor hydroxyproline.. Type IV dipeptidyl-peptidase which removes N-terminal dipeptides sequentially from polypeptides having unsubstituted N-termini provided that the penultimate residue is proline. The protein is Probable dipeptidyl-aminopeptidase B (DAPB) of Verticillium alfalfae (strain VaMs.102 / ATCC MYA-4576 / FGSC 10136) (Verticillium wilt of alfalfa).